The primary structure comprises 491 residues: Cytochrome P450 2F2 (491 aa).

C436 contacts heme.

This sequence belongs to the cytochrome P450 family. Heme is required as a cofactor.

The protein localises to the endoplasmic reticulum membrane. The protein resides in the microsome membrane. Functionally, involved in the regio- and stereoselective transformation of naphthalene to trans-1R-hydroxy-2R-glutathionyl-1,2-dihydronaphthalene in the presence of glutathione and glutathione S-transferases. It specifically catalyzes the production of a very reactive and potentially toxic intermediate, the 2R,2S arene oxide, that is associated with necrosis of the unciliated bronchiolar epithelial cells or club cells in lung. The sequence is that of Cytochrome P450 2F2 (Cyp2f2) from Rattus norvegicus (Rat).